The primary structure comprises 209 residues: MGAILGKKIGMTRLYNDKREAISCTIIQAGPCFVTQVKHAEKDGYDAYQIGIGERDEKKVNKPMLGHYKKAGVTPGYKIAEFSKSEINLELEAGAPLDLSVFKEGEKINVLGVSKGKGFAGVVKRHNFGGGSRTHGQSDRLRAPGSVGGSSDPSRTFRGTRMAGRMGGCNITVKNLEIIRIMPESNLLVVKGAIPGPKNSYVKIVSTKK.

A disordered region spans residues 128-163 (FGGGSRTHGQSDRLRAPGSVGGSSDPSRTFRGTRMA).

It belongs to the universal ribosomal protein uL3 family. As to quaternary structure, part of the 50S ribosomal subunit. Forms a cluster with proteins L14 and L19.

In terms of biological role, one of the primary rRNA binding proteins, it binds directly near the 3'-end of the 23S rRNA, where it nucleates assembly of the 50S subunit. The protein is Large ribosomal subunit protein uL3 of Chlorobium phaeobacteroides (strain DSM 266 / SMG 266 / 2430).